A 333-amino-acid polypeptide reads, in one-letter code: Ribosomal RNA small subunit methyltransferase H (333 aa).

Residues 42–44, Asp62, Phe86, Asp105, and Gln112 each bind S-adenosyl-L-methionine; that span reads GGH.

The protein belongs to the methyltransferase superfamily. RsmH family.

The protein localises to the cytoplasm. The enzyme catalyses cytidine(1402) in 16S rRNA + S-adenosyl-L-methionine = N(4)-methylcytidine(1402) in 16S rRNA + S-adenosyl-L-homocysteine + H(+). In terms of biological role, specifically methylates the N4 position of cytidine in position 1402 (C1402) of 16S rRNA. This Cupriavidus necator (strain ATCC 17699 / DSM 428 / KCTC 22496 / NCIMB 10442 / H16 / Stanier 337) (Ralstonia eutropha) protein is Ribosomal RNA small subunit methyltransferase H.